A 192-amino-acid chain; its full sequence is Glutaredoxin-C9 (192 aa).

A Glutaredoxin domain is found at Tyr89 to Trp191. A disulfide bridge connects residues Cys109 and Cys112. Residues Ala189–Leu192 carry the Responsive for interaction with TGA factors motif.

This sequence belongs to the glutaredoxin family. CC-type subfamily.

The protein resides in the cytoplasm. It localises to the nucleus. Its function is as follows. Has a glutathione-disulfide oxidoreductase activity in the presence of NADPH and glutathione reductase. Reduces low molecular weight disulfides and proteins. The sequence is that of Glutaredoxin-C9 (GRXC9) from Oryza sativa subsp. japonica (Rice).